The sequence spans 157 residues: Phospholipase A2 phaiodactylipin (157 aa).

Positions 34 and 36 each coordinate Ca(2+). 5 disulfides stabilise this stretch: cysteine 35–cysteine 56, cysteine 55–cysteine 94, cysteine 62–cysteine 87, cysteine 85–cysteine 127, and cysteine 132–cysteine 143. Residue asparagine 43 is glycosylated (N-linked (GlcNAc...) asparagine). Residue histidine 59 is part of the active site. Aspartate 60 contributes to the Ca(2+) binding site. Residue aspartate 88 is part of the active site. The N-linked (GlcNAc...) asparagine glycan is linked to asparagine 101. A propeptide spans 134–139 (DEKSAR) (removed in mature form). A glycan (N-linked (GlcNAc...) asparagine) is linked at asparagine 153.

Belongs to the phospholipase A2 family. Group III subfamily. In terms of assembly, heterodimer composed of a small subunit and a large subunit; disulfide-linked. The cofactor is Ca(2+). As to expression, expressed by the venom gland.

The protein localises to the secreted. It carries out the reaction a 1,2-diacyl-sn-glycero-3-phosphocholine + H2O = a 1-acyl-sn-glycero-3-phosphocholine + a fatty acid + H(+). Scorpion venom phospholipase A2 (PLA2) that is lethal to crickets and crustaceae. Causes inflammation in mice and lysis of human erythrocytes. Has a mild anticoagulant effect on human platelets. PLA2 catalyzes the calcium-dependent hydrolysis of the 2-acyl groups in 3-sn-phosphoglycerides. This chain is Phospholipase A2 phaiodactylipin, found in Anuroctonus phaiodactylus (Mafia scorpion).